The chain runs to 381 residues: Creatine kinase M-type (381 aa).

The Phosphagen kinase N-terminal domain occupies 11–98; sequence KLNFKAEEEY…FDPIIQDRHG (88 aa). A Phosphagen kinase C-terminal domain is found at 125–367; it reads YVLSSRVRTG…KLMVEMEKKL (243 aa). Position 128 to 132 (128 to 132) interacts with ATP; the sequence is SSRVR. Position 164 is a phosphoserine (S164). Phosphothreonine is present on T166. S178 carries the phosphoserine modification. T180 carries the post-translational modification Phosphothreonine. H191 is a binding site for ATP. S199 bears the Phosphoserine mark. Residues R236 and R292 each contribute to the ATP site. Residues T313 and T322 each carry the phosphothreonine modification. ATP-binding positions include 320–325 and D335; that span reads RGTGGV. Phosphoserine is present on S372.

This sequence belongs to the ATP:guanido phosphotransferase family. Dimer of identical or non-identical chains, which can be either B (brain type) or M (muscle type). With MM being the major form in skeletal muscle and myocardium, MB existing in myocardium, and BB existing in many tissues, especially brain.

It is found in the cytoplasm. The enzyme catalyses creatine + ATP = N-phosphocreatine + ADP + H(+). In terms of biological role, reversibly catalyzes the transfer of phosphate between ATP and various phosphogens (e.g. creatine phosphate). Creatine kinase isoenzymes play a central role in energy transduction in tissues with large, fluctuating energy demands, such as skeletal muscle, heart, brain and spermatozoa. This chain is Creatine kinase M-type (CKM), found in Bos taurus (Bovine).